A 161-amino-acid chain; its full sequence is Nucleotide-binding protein Shew_2893 (161 aa).

This sequence belongs to the YajQ family.

Its function is as follows. Nucleotide-binding protein. The polypeptide is Nucleotide-binding protein Shew_2893 (Shewanella loihica (strain ATCC BAA-1088 / PV-4)).